A 178-amino-acid chain; its full sequence is Large ribosomal subunit protein uL5 (178 aa).

This sequence belongs to the universal ribosomal protein uL5 family. As to quaternary structure, part of the 50S ribosomal subunit; part of the 5S rRNA/L5/L18/L25 subcomplex. Contacts the 5S rRNA and the P site tRNA. Forms a bridge to the 30S subunit in the 70S ribosome.

This is one of the proteins that bind and probably mediate the attachment of the 5S RNA into the large ribosomal subunit, where it forms part of the central protuberance. In the 70S ribosome it contacts protein S13 of the 30S subunit (bridge B1b), connecting the 2 subunits; this bridge is implicated in subunit movement. Contacts the P site tRNA; the 5S rRNA and some of its associated proteins might help stabilize positioning of ribosome-bound tRNAs. This chain is Large ribosomal subunit protein uL5, found in Psychrobacter sp. (strain PRwf-1).